The sequence spans 1013 residues: MVVFLGRHLPALLEVFKKGSAKAESDNRQGAGPSQGPGSVGDELQDNVFFPSGRPPHLEELHTQAQEGLRSLQHQERQKLSKGGWDHGDTQSIQSSQTGPDEDTISIYSQKSYMTESSTAEDALSVRSEMIQRRGSTFRPHDSFPKSGKSGRRRRERRSTVLGLPQHVQKELGLRNNREAPGTPQPPGSRDAVRIPTVDGRPGLALGTGVRVSLQALEAETEAGTDAEAVIQRHIDRVYHDDTLVGRSTGARPPPLTRPMSLAVPGLTGGAGSPEPLSPAMSISPQATYLSKLIPHAVLPPTVDVVALGRSSLRTLSRCSLLSASPASVRSLGRFSSASSPRPRSRNASSSSDNWSHSQSSETIVSDGSTLSSKGGSEGQPEGSVASNNVAPPPPGGSGRGSPSGGSTAETSDTASIRSSGQLSGRSVSLRKMKRPPPPPRRTYSLHQRGSAVPDGPLGLPPKPERKQQPQLPRPPTAGGSSGVGAVSCPPSSAGTWGSGLSPGGSRRPPRSPERTLSPSSGYSSQSGTPTLPPKGLAVAPASPGKAQPPKPDRVTSLRSPGASVSSSLTSLCSSSSDPTPLDRSGPQMSTPLSDRFVIPPHPKVPAPFSPPPSKSKSSNQAAPVLAAPAVAPGQVSTIDTSPASPSMPQTTLTPAQESPVASKDESPPPSPPPSYHPPPPPTKKPEVLEEAPPPPEAAVEILPDPSWPPPPPPAPEEQDLSMADFPPPEEVFFNAGPELGPLESCSSEAAVPPAASLSQTPPPAPPPSSGSEPLARLPQKDSVGKHSGAPREDSGTPLVTPSLLQMVRLRSVGASTGIPNPSPGSSAPQKPLRRALSGRASPVTAPSSGLHAAVRLKASSLAASESPASALPTGIPEAEPRSPQSPASKASFIFSKGTKKLQLERPVSPEAQADLQRNLVAELRSISEHRPPPQAQKKPSKAPPPVARKPSVGVPPPSPSLPRTESLTAPSTNGLPHAEDRTNGELAENGGVQLAATEKMGSPGSDPQKKLV.

Lysine 17 carries the post-translational modification Phosphoserine. Residues 20–195 are disordered; that stretch reads SAKAESDNRQ…PPGSRDAVRI (176 aa). Residues 73–89 show a composition bias toward basic and acidic residues; the sequence is QHQERQKLSKGGWDHGD. 2 stretches are compositionally biased toward polar residues: residues 90-99 and 106-120; these read TQSIQSSQTG and SIYS…SSTA. Position 92 is a phosphoserine (serine 92). Tyrosine 108 is modified (phosphotyrosine). Phosphoserine occurs at positions 136, 143, and 159. A Phosphothreonine modification is found at threonine 160. Residues 168–178 show a composition bias toward basic and acidic residues; that stretch reads VQKELGLRNNR. Position 213 is a phosphoserine (serine 213). Residue arginine 318 is modified to Asymmetric dimethylarginine. Serine 320, serine 325, serine 328, serine 336, serine 337, serine 339, and serine 340 each carry phosphoserine. The interval 330–1013 is disordered; sequence RSLGRFSSAS…PGSDPQKKLV (684 aa). Residues 336–361 show a composition bias toward low complexity; the sequence is SSASSPRPRSRNASSSSDNWSHSQSS. Residues 362–375 show a composition bias toward polar residues; that stretch reads ETIVSDGSTLSSKG. Phosphoserine is present on residues serine 398, serine 402, and serine 407. Polar residues predominate over residues 408 to 427; sequence TAETSDTASIRSSGQLSGRS. Composition is skewed to low complexity over residues 484 to 493 and 515 to 530; these read VGAVSCPPSS and RTLS…SGTP. Threonine 529 bears the Phosphothreonine mark. At serine 543 the chain carries Phosphoserine. Residues 564–577 show a composition bias toward low complexity; the sequence is SVSSSLTSLCSSSS. Residue threonine 591 is modified to Phosphothreonine. Positions 600 to 614 are enriched in pro residues; it reads PPHPKVPAPFSPPPS. Position 610 is a phosphoserine (serine 610). Positions 615-633 are enriched in low complexity; the sequence is KSKSSNQAAPVLAAPAVAP. Positions 635–657 are enriched in polar residues; the sequence is QVSTIDTSPASPSMPQTTLTPAQ. Residues serine 667 and serine 671 each carry the phosphoserine modification. Composition is skewed to pro residues over residues 668–683 and 706–716; these read PPPS…PPPT and PSWPPPPPPAP. The segment covering 779 to 795 has biased composition (basic and acidic residues); that stretch reads PQKDSVGKHSGAPREDS. A compositionally biased stretch (polar residues) spans 814 to 829; that stretch reads GASTGIPNPSPGSSAP. Phosphoserine occurs at positions 838, 842, and 848. Positions 859–873 are enriched in low complexity; sequence ASSLAASESPASALP. A phosphoserine mark is found at serine 909, serine 952, and serine 959. Positions 942 to 961 are enriched in pro residues; that stretch reads KAPPPVARKPSVGVPPPSPS. Residues 964–975 show a composition bias toward polar residues; that stretch reads RTESLTAPSTNG.

In terms of biological role, able to directly activate the TNF-NFkappaB signaling pathway. This is NHS-like protein 3 (Nhsl3) from Mus musculus (Mouse).